Here is a 95-residue protein sequence, read N- to C-terminus: Mitochondrial import inner membrane translocase subunit Tim13 (95 aa).

Methionine 1 carries the N-acetylmethionine modification. Serine 7 bears the Phosphoserine mark. A Twin CX3C motif motif is present at residues 46 to 69; sequence CFRKCIGKPGGSLDNSEQKCIAMC. Cystine bridges form between cysteine 46–cysteine 69 and cysteine 50–cysteine 65. Position 53 is an N6-succinyllysine (lysine 53).

The protein belongs to the small Tim family. In terms of assembly, heterohexamer; composed of 3 copies of TIMM8 (TIMM8A or TIMM8B) and 3 copies of TIMM13, named soluble 70 kDa complex. Associates with the TIM22 complex, whose core is composed of TIMM22. In terms of tissue distribution, ubiquitous, with highest expression in heart, kidney, liver and skeletal muscle.

Its subcellular location is the mitochondrion inner membrane. Mitochondrial intermembrane chaperone that participates in the import and insertion of some multi-pass transmembrane proteins into the mitochondrial inner membrane. Also required for the transfer of beta-barrel precursors from the TOM complex to the sorting and assembly machinery (SAM complex) of the outer membrane. Acts as a chaperone-like protein that protects the hydrophobic precursors from aggregation and guide them through the mitochondrial intermembrane space. The TIMM8-TIMM13 complex mediates the import of proteins such as TIMM23, SLC25A12/ARALAR1 and SLC25A13/ARALAR2, while the predominant TIMM9-TIMM10 70 kDa complex mediates the import of much more proteins. This is Mitochondrial import inner membrane translocase subunit Tim13 (TIMM13) from Homo sapiens (Human).